The sequence spans 436 residues: UPF0597 protein YhaM (436 aa).

Belongs to the UPF0597 family.

This is UPF0597 protein YhaM from Salmonella typhi.